We begin with the raw amino-acid sequence, 271 residues long: MNGSLSQHDQERLSTPYRDGPPEETVYLVTGASRGIGRGLIEAFLQRPKSTVVAWLRNVRTATPALSALTVAEGSRMIIVQLNSDSETDAQAAVQTLREEHGVTHLDVVVANAAMATNFGPASTMPLEHLQAHMMVNMYAPVLLFQATRLMLQQSKQQAKFVLIGAPISTITNMHDYSRAPLTAYGVSKLAANYMVRKFHFENKWLTAFIIDPGHVQTDMGDQGARLMGRPQAPTTVADSVAGICARIDEATKETTSGHFVIHTDGSQLPW.

The interval 1–22 (MNGSLSQHDQERLSTPYRDGPP) is disordered. NADP(+) contacts are provided by Ile-36, Asn-112, Tyr-185, Lys-189, Val-216, and Thr-218. Catalysis depends on Tyr-185, which acts as the Proton donor. Lys-189 serves as the catalytic Lowers pKa of active site Tyr.

Belongs to the short-chain dehydrogenases/reductases (SDR) family.

The protein localises to the cytoplasm. It is found in the cytosol. Its subcellular location is the vacuole. The enzyme catalyses (1'S)-averantin + NADP(+) = norsolorinic acid + NADPH + H(+). It participates in mycotoxin biosynthesis; aflatoxin biosynthesis. Functionally, norsolorinic acid ketoreductase; part of the gene cluster that mediates the biosynthesis of aflatoxins, a group of polyketide-derived furanocoumarins, and part of the most toxic and carcinogenic compounds among the known mycotoxins. The four major aflatoxins produced by A.parasiticus are aflatoxin B1 (AFB1), aflatoxin B2 (AFB2), aflatoxin G1 (AFG1) and aflatoxin G2 (AFG2). Within the aflatoxin pathway, the norsolorinic acid ketoreductase aflD performs the second step by catalyzing the dehydration of norsolorinic acid (NOR) to form (1'S)-averantin (AVN). The biosynthesis of aflatoxins begins with the norsolorinic acid synthase aflC that combines a hexanoyl starter unit produced by the fatty acid synthase aflA/aflB and 7 malonyl-CoA extender units to synthesize the precursor NOR. The second step is the conversion of NOR to averantin and requires the norsolorinic acid ketoreductase aflD, which catalyzes the dehydration of norsolorinic acid to form (1'S)-averantin. The norsolorinic acid reductases aflE and aflF may also play a role in the conversion of NOR to AVN. The cytochrome P450 monooxygenase aflG then catalyzes the hydroxylation of AVN to 5'hydroxyaverantin (HAVN). The next step is performed by the 5'-hydroxyaverantin dehydrogenase aflH that transforms HAVN to 5'-oxoaverantin (OAVN) which is further converted to averufin (AVF) by aflK that plays a dual role in the pathway, as a 5'-oxoaverantin cyclase that mediates conversion of 5'-oxoaverantin, as well as a versicolorin B synthase in a later step in the pathway. The averufin oxidase aflI catalyzes the conversion of AVF to versiconal hemiacetal acetate (VHA). VHA is then the substrate for the versiconal hemiacetal acetate esterase aflJ to yield versiconal (VAL). Versicolorin B synthase aflK then converts VAL to versicolorin B (VERB) by closing the bisfuran ring of aflatoxin which is required for DNA-binding, thus giving to aflatoxin its activity as a mutagen. Then, the activity of the versicolorin B desaturase aflL leads to versicolorin A (VERA). A branch point starts from VERB since it can also be converted to dihydrodemethylsterigmatocystin (DMDHST), probably also by aflL, VERA being a precursor for aflatoxins B1 and G1, and DMDHST for aflatoxins B2 and G2. Next, the versicolorin reductase aflM and the cytochrome P450 monooxygenase aflN are involved in conversion of VERA to demethylsterigmatocystin (DMST). AflX and aflY seem also involved in this step, through probable aflX-mediated epoxide ring-opening step following versicolorin A oxidation and aflY-mediated Baeyer-Villiger oxidation required for the formation of the xanthone ring. The methyltransferase aflO then leads to the modification of DMST to sterigmatocystin (ST), and of DMDHST to dihydrosterigmatocystin (DHST). Both ST and DHST are then substrates of the O-methyltransferase aflP to yield O-methylsterigmatocystin (OMST) and dihydro-O-methylsterigmatocystin (DHOMST), respectively. Finally OMST is converted to aflatoxins B1 and G1, and DHOMST to aflatoxins B2 and G2, via the action of several enzymes including O-methylsterigmatocystin oxidoreductase aflQ, the cytochrome P450 monooxygenase aflU, but also the NADH-dependent flavin oxidoreductase nadA which is specifically required for the synthesis of AFG1. This Aspergillus parasiticus (strain ATCC 56775 / NRRL 5862 / SRRC 143 / SU-1) protein is Norsolorinic acid ketoreductase.